A 505-amino-acid polypeptide reads, in one-letter code: Aspartyl/glutamyl-tRNA(Asn/Gln) amidotransferase subunit B (505 aa).

It belongs to the GatB/GatE family. GatB subfamily. Heterotrimer of A, B and C subunits.

It catalyses the reaction L-glutamyl-tRNA(Gln) + L-glutamine + ATP + H2O = L-glutaminyl-tRNA(Gln) + L-glutamate + ADP + phosphate + H(+). The enzyme catalyses L-aspartyl-tRNA(Asn) + L-glutamine + ATP + H2O = L-asparaginyl-tRNA(Asn) + L-glutamate + ADP + phosphate + 2 H(+). Allows the formation of correctly charged Asn-tRNA(Asn) or Gln-tRNA(Gln) through the transamidation of misacylated Asp-tRNA(Asn) or Glu-tRNA(Gln) in organisms which lack either or both of asparaginyl-tRNA or glutaminyl-tRNA synthetases. The reaction takes place in the presence of glutamine and ATP through an activated phospho-Asp-tRNA(Asn) or phospho-Glu-tRNA(Gln). The protein is Aspartyl/glutamyl-tRNA(Asn/Gln) amidotransferase subunit B of Dinoroseobacter shibae (strain DSM 16493 / NCIMB 14021 / DFL 12).